Consider the following 216-residue polypeptide: Holliday junction branch migration complex subunit RuvA (216 aa).

Residues 1–64 (MISFIKGVLI…EDAQQLYGFK (64 aa)) form a domain I region. Residues 65 to 143 (SKVDKKVFQE…KMANEIYAQT (79 aa)) form a domain II region. A flexible linker region spans residues 144 to 163 (SGTTTTSQDSQAQQAPTSVV). The segment at 164 to 216 (LANSIFNESVDALLALGYKQKDAEKMARSAMGDATTAAEVIRKALQGSIKSKR) is domain III.

It belongs to the RuvA family. In terms of assembly, homotetramer. Forms an RuvA(8)-RuvB(12)-Holliday junction (HJ) complex. HJ DNA is sandwiched between 2 RuvA tetramers; dsDNA enters through RuvA and exits via RuvB. An RuvB hexamer assembles on each DNA strand where it exits the tetramer. Each RuvB hexamer is contacted by two RuvA subunits (via domain III) on 2 adjacent RuvB subunits; this complex drives branch migration. In the full resolvosome a probable DNA-RuvA(4)-RuvB(12)-RuvC(2) complex forms which resolves the HJ.

The protein resides in the cytoplasm. In terms of biological role, the RuvA-RuvB-RuvC complex processes Holliday junction (HJ) DNA during genetic recombination and DNA repair, while the RuvA-RuvB complex plays an important role in the rescue of blocked DNA replication forks via replication fork reversal (RFR). RuvA specifically binds to HJ cruciform DNA, conferring on it an open structure. The RuvB hexamer acts as an ATP-dependent pump, pulling dsDNA into and through the RuvAB complex. HJ branch migration allows RuvC to scan DNA until it finds its consensus sequence, where it cleaves and resolves the cruciform DNA. The polypeptide is Holliday junction branch migration complex subunit RuvA (Francisella tularensis subsp. tularensis (strain WY96-3418)).